Here is a 328-residue protein sequence, read N- to C-terminus: DNA-directed RNA polymerase subunit alpha (328 aa).

Residues 1–235 (MQGSVTEFLK…EQLDAFVDLR (235 aa)) form an alpha N-terminal domain (alpha-NTD) region. The alpha C-terminal domain (alpha-CTD) stretch occupies residues 249 to 328 (FDPILLRPVD…ENWPPASLAE (80 aa)).

The protein belongs to the RNA polymerase alpha chain family. In terms of assembly, homodimer. The RNAP catalytic core consists of 2 alpha, 1 beta, 1 beta' and 1 omega subunit. When a sigma factor is associated with the core the holoenzyme is formed, which can initiate transcription.

It catalyses the reaction RNA(n) + a ribonucleoside 5'-triphosphate = RNA(n+1) + diphosphate. DNA-dependent RNA polymerase catalyzes the transcription of DNA into RNA using the four ribonucleoside triphosphates as substrates. The polypeptide is DNA-directed RNA polymerase subunit alpha (Pseudoalteromonas translucida (strain TAC 125)).